Reading from the N-terminus, the 364-residue chain is Trans-enoyl reductase ccsC (364 aa).

Position 52–55 (52–55 (CDYK)) interacts with NADP(+). A substrate-binding site is contributed by 141–148 (TGLATLGM). NADP(+)-binding positions include 176–179 (SSSV), 199–202 (SPRN), Y217, and 264–265 (LE). 284–288 (GPALL) serves as a coordination point for substrate. NADP(+) is bound at residue 353–354 (VS).

It belongs to the zinc-containing alcohol dehydrogenase family. As to quaternary structure, monomer.

It functions in the pathway mycotoxin biosynthesis. Its function is as follows. Trans-enoyl reductase; part of the gene cluster that mediates the biosynthesis of a family of the mycotoxins cytochalasins E and K. The hybrid PKS-NRPS synthetase ccsA and the enoyl reductase ccsC are responsible for fusion of phenylalanine with an octaketide backbone and subsequent release of the stable tetramic acid precursor. The polyketide synthase module (PKS) of the PKS-NRPS ccsA is responsible for the synthesis of the octaketide backbone. The downstream nonribosomal peptide synthetase (NRPS) amidates the carboxyl end of the octaketide with a phenylalanine. A reductase-like domain (R) at the C-terminus catalyzes the reductive release of the polyketide-amino acid intermediate. Because ccsA lacks a designated enoylreductase (ER) domain, the required activity is provided the enoyl reductase ccsC. Upon formation of the 11-membered carbocycle-fused perhydroisoindolone intermediate, a number of oxidative steps are required to afford the final cytochalasin E and K, including two hydroxylations at C17 and C18, one alcohol oxidation at C17, one epoxidation at C6 and C7 and two Baeyer-Villiger oxidations. The oxidative modification at C17, C18 and the C6-C7 epoxidation are likely to be catalyzed by the two cytochrome P450 oxygenases ccsD and ccsG. CcsD may be responsible for the epoxidation of the C6-C7 double bond. CcsG may be responsible for the successive oxidative modifications at C17 and C18. The double Baeyer-Villiger oxidations of ketocytochalasin to precytochalasin and cytochalasin Z(16) are among the final steps leading to cytochalasin E and K and are catalyzed by ccsB. The first oxygen insertion step follows that of the classic BVMO mechanism, generating the ester precytochalasin. Release of precytochalasin into an aqueous environment can generate the shunt product iso-precytochalasin through spontaneous isomerization. Alternatively, precytochalasin can undergo further oxidation by ccsB to yield the in-line carbonate-containing cytochalasin Z(16). Cytochalasin Z(16) is a precursor to cytochalasin E and cytochalasin K, whereas iso-precytochalasin is a precursor to cytochalasin Z(17) and rosellichalasin. The hydrolyase ccsE may catalyze hydrolysis of epoxide bond in cytochalasin E to afford cytochalasin K. The function of ccsF has not been assigned but it may play a role in post-PKS-NRPS biosynthetic step, resistance or transport of cytochalasins and related PKS-NRPS products. The chain is Trans-enoyl reductase ccsC from Aspergillus clavatus (strain ATCC 1007 / CBS 513.65 / DSM 816 / NCTC 3887 / NRRL 1 / QM 1276 / 107).